The chain runs to 441 residues: Enolase (441 aa).

A (2R)-2-phosphoglycerate-binding site is contributed by glutamine 163. Glutamate 205 acts as the Proton donor in catalysis. Mg(2+) contacts are provided by aspartate 242, glutamate 288, and aspartate 315. 4 residues coordinate (2R)-2-phosphoglycerate: lysine 340, arginine 369, serine 370, and lysine 391. Lysine 340 functions as the Proton acceptor in the catalytic mechanism.

This sequence belongs to the enolase family. The cofactor is Mg(2+).

The protein resides in the cytoplasm. It is found in the secreted. The protein localises to the cell surface. It carries out the reaction (2R)-2-phosphoglycerate = phosphoenolpyruvate + H2O. Its pathway is carbohydrate degradation; glycolysis; pyruvate from D-glyceraldehyde 3-phosphate: step 4/5. In terms of biological role, catalyzes the reversible conversion of 2-phosphoglycerate (2-PG) into phosphoenolpyruvate (PEP). It is essential for the degradation of carbohydrates via glycolysis. The chain is Enolase from Ligilactobacillus salivarius (strain UCC118) (Lactobacillus salivarius).